A 222-amino-acid chain; its full sequence is PKHD-type hydroxylase Syncc9902_2001 (222 aa).

Positions 80–174 (RVHSILISRS…RLVCVGWIES (95 aa)) constitute a Fe2OG dioxygenase domain. His-98, Asp-100, and His-155 together coordinate Fe cation. Arg-165 contacts 2-oxoglutarate.

Fe(2+) is required as a cofactor. It depends on L-ascorbate as a cofactor.

The chain is PKHD-type hydroxylase Syncc9902_2001 from Synechococcus sp. (strain CC9902).